The chain runs to 217 residues: Ribonuclease T (217 aa).

The 176-residue stretch at 20-195 (VVVDVETAGF…YDTEKTAELF (176 aa)) folds into the Exonuclease domain. The Mg(2+) site is built by Asp-23, Glu-25, His-182, and Asp-187. His-182 (proton donor/acceptor) is an active-site residue.

Belongs to the RNase T family. In terms of assembly, homodimer. The cofactor is Mg(2+).

In terms of biological role, trims short 3' overhangs of a variety of RNA species, leaving a one or two nucleotide 3' overhang. Responsible for the end-turnover of tRNA: specifically removes the terminal AMP residue from uncharged tRNA (tRNA-C-C-A). Also appears to be involved in tRNA biosynthesis. The sequence is that of Ribonuclease T from Vibrio vulnificus (strain YJ016).